The chain runs to 118 residues: Transcription factor PAR2 (118 aa).

Positions 1-59 are disordered; it reads MEKTLATSHTKRSSPPSPSSAVNTSSTGFNRRTRQRLSDATASVSETDVEDEDEDEEGV. Residues 19-30 show a composition bias toward polar residues; that stretch reads SSAVNTSSTGFN. The 50-residue stretch at 43–92 folds into the bHLH domain; it reads SVSETDVEDEDEDEEGVEEKIEALQTIVPGGTELGVDALFEETASYILAL. A compositionally biased stretch (acidic residues) spans 47 to 59; the sequence is TDVEDEDEDEEGV.

It belongs to the bHLH protein family. As to quaternary structure, homodimer.

The protein resides in the nucleus. Functionally, atypical bHLH transcription factor that acts as a negative regulator of a variety of shade avoidance syndrome (SAS) responses, including seedling elongation and photosynthetic pigment accumulation. Acts as a direct transcriptional repressor of two auxin-responsive genes, SAUR15 and SAUR68. May function in integrating shade and hormone transcriptional networks in response to light and auxin changes. The chain is Transcription factor PAR2 (PAR2) from Arabidopsis thaliana (Mouse-ear cress).